Reading from the N-terminus, the 220-residue chain is Translin-1 (220 aa).

This sequence belongs to the translin family. As to quaternary structure, forms an octameric ring-shaped structure, which is capable of binding DNA or RNA.

It localises to the cytoplasm. Its subcellular location is the nucleus. DNA-binding protein that specifically recognizes consensus sequences at the breakpoint junctions in chromosomal translocations. Selectively binds single-stranded d(GT)n and d(GTT)n microsatellite repeats. Has much higher affinities for the homologous RNA sequences (GU)n and (GUU)n. Does not bind double-stranded DNA. Has a role in meiosis. This Schizosaccharomyces pombe (strain 972 / ATCC 24843) (Fission yeast) protein is Translin-1 (tsn1).